Reading from the N-terminus, the 102-residue chain is Scorpine-like-2 (102 aa).

The N-terminal stretch at 1–19 is a signal peptide; sequence MQTQCTVLQLLVLVALCSC. Residues 63–102 enclose the BetaSPN-type CS-alpha/beta domain; it reads QQLCLIVDTVQWCNKSCLAAENKEGYCHGTKCKCGIKVSY. Disulfide bonds link cysteine 66/cysteine 89, cysteine 75/cysteine 94, and cysteine 79/cysteine 96.

Belongs to the long chain scorpion toxin family. Class 3 subfamily. As to expression, expressed by the venom gland.

The protein resides in the secreted. Inhibits voltage-gated potassium channels. This is Scorpine-like-2 from Urodacus yaschenkoi (Inland robust scorpion).